Here is a 137-residue protein sequence, read N- to C-terminus: Large ribosomal subunit protein uL16 (137 aa).

This sequence belongs to the universal ribosomal protein uL16 family. Part of the 50S ribosomal subunit.

Binds 23S rRNA and is also seen to make contacts with the A and possibly P site tRNAs. The chain is Large ribosomal subunit protein uL16 from Leuconostoc citreum (strain KM20).